A 501-amino-acid polypeptide reads, in one-letter code: Dye-decolorizing peroxidase (501 aa).

The signal sequence occupies residues 1-21 (MRLSPSFLSLALVIFVGEVVA). A propeptide spanning residues 22–60 (RNVVARASNPASVTGTRKVSLLKNVAGLPAVPTAQQVAV) is cleaved from the precursor. The active-site Proton acceptor is the aspartate 228. N-linked (GlcNAc...) asparagine glycosylation is present at asparagine 352. Residue histidine 367 coordinates heme. A glycan (N-linked (GlcNAc...) asparagine) is linked at asparagine 403.

Belongs to the DyP-type peroxidase family. Heme b is required as a cofactor.

The protein localises to the secreted. It carries out the reaction Reactive Blue 5 + 2 H2O2 = 2,2'-disulfonyl azobenzene + 3-[(4-amino-6-chloro-1,3,5-triazin-2-yl)amino]benzenesulfonate + phthalate + 2 H2O + 2 H(+). It catalyses the reaction 2 a phenolic donor + H2O2 = 2 a phenolic radical donor + 2 H2O. Its function is as follows. Manganese-independent peroxidase that is able to convert a large number of compounds, but its physiological substrate is not known. In addition to classic peroxidase substrates (e.g. 2,6-dimethoxyphenol), oxidizes dyes such as Reactive Blue 5 and Reactive Black 5. The polypeptide is Dye-decolorizing peroxidase (Exidia glandulosa (Black witch's butter)).